Reading from the N-terminus, the 55-residue chain is Large ribosomal subunit protein bL33 (55 aa).

It belongs to the bacterial ribosomal protein bL33 family.

This is Large ribosomal subunit protein bL33 from Gluconobacter oxydans (strain 621H) (Gluconobacter suboxydans).